The following is a 683-amino-acid chain: DNA ligase (683 aa).

NAD(+)-binding positions include 44-48, 93-94, and Glu-127; these read DAEYD and SL. Lys-129 acts as the N6-AMP-lysine intermediate in catalysis. 4 residues coordinate NAD(+): Arg-150, Glu-187, Lys-302, and Lys-326. Residues Cys-420, Cys-423, Cys-438, and Cys-444 each coordinate Zn(2+). The region spanning 601–683 is the BRCT domain; the sequence is RVGGRLAGLT…SKLLATGGNQ (83 aa).

Belongs to the NAD-dependent DNA ligase family. LigA subfamily. Mg(2+) is required as a cofactor. Mn(2+) serves as cofactor.

The enzyme catalyses NAD(+) + (deoxyribonucleotide)n-3'-hydroxyl + 5'-phospho-(deoxyribonucleotide)m = (deoxyribonucleotide)n+m + AMP + beta-nicotinamide D-nucleotide.. In terms of biological role, DNA ligase that catalyzes the formation of phosphodiester linkages between 5'-phosphoryl and 3'-hydroxyl groups in double-stranded DNA using NAD as a coenzyme and as the energy source for the reaction. It is essential for DNA replication and repair of damaged DNA. The protein is DNA ligase of Trichlorobacter lovleyi (strain ATCC BAA-1151 / DSM 17278 / SZ) (Geobacter lovleyi).